Consider the following 28-residue polypeptide: Peptide 2 (28 aa).

The protein belongs to the short scorpion toxin superfamily. Potassium channel inhibitor family. Alpha-KTx 09 subfamily. In terms of tissue distribution, expressed by the venom gland.

It is found in the secreted. Its function is as follows. Blocks potassium channels. The polypeptide is Peptide 2 (Hottentotta tamulus sindicus (Scorpion)).